A 679-amino-acid chain; its full sequence is DNA ligase (679 aa).

Residues 36–40 (DAQYD), 85–86 (SL), and Glu-116 contribute to the NAD(+) site. The active-site N6-AMP-lysine intermediate is Lys-118. 4 residues coordinate NAD(+): Arg-139, Glu-174, Lys-300, and Lys-324. Residues Cys-418, Cys-421, Cys-436, and Cys-441 each contribute to the Zn(2+) site. In terms of domain architecture, BRCT spans 600–679 (EGGGPLNGKV…NEFRELTGRK (80 aa)).

This sequence belongs to the NAD-dependent DNA ligase family. LigA subfamily. The cofactor is Mg(2+). Requires Mn(2+) as cofactor.

The enzyme catalyses NAD(+) + (deoxyribonucleotide)n-3'-hydroxyl + 5'-phospho-(deoxyribonucleotide)m = (deoxyribonucleotide)n+m + AMP + beta-nicotinamide D-nucleotide.. Functionally, DNA ligase that catalyzes the formation of phosphodiester linkages between 5'-phosphoryl and 3'-hydroxyl groups in double-stranded DNA using NAD as a coenzyme and as the energy source for the reaction. It is essential for DNA replication and repair of damaged DNA. In Pelotomaculum thermopropionicum (strain DSM 13744 / JCM 10971 / SI), this protein is DNA ligase.